A 351-amino-acid chain; its full sequence is Biotin synthase (351 aa).

A Radical SAM core domain is found at 48-265 (NKVRIHILDN…LCMFRLINPD (218 aa)). Residues C63, C67, and C70 each coordinate [4Fe-4S] cluster. The [2Fe-2S] cluster site is built by C107, C139, C199, and R269.

The protein belongs to the radical SAM superfamily. Biotin synthase family. In terms of assembly, homodimer. The cofactor is [4Fe-4S] cluster. It depends on [2Fe-2S] cluster as a cofactor.

It carries out the reaction (4R,5S)-dethiobiotin + (sulfur carrier)-SH + 2 reduced [2Fe-2S]-[ferredoxin] + 2 S-adenosyl-L-methionine = (sulfur carrier)-H + biotin + 2 5'-deoxyadenosine + 2 L-methionine + 2 oxidized [2Fe-2S]-[ferredoxin]. It functions in the pathway cofactor biosynthesis; biotin biosynthesis; biotin from 7,8-diaminononanoate: step 2/2. Its function is as follows. Catalyzes the conversion of dethiobiotin (DTB) to biotin by the insertion of a sulfur atom into dethiobiotin via a radical-based mechanism. The polypeptide is Biotin synthase (Leptospira interrogans serogroup Icterohaemorrhagiae serovar Lai (strain 56601)).